We begin with the raw amino-acid sequence, 667 residues long: MNMTVEWSPQRTRATEQGQPLLRLAGVSRRFMAGDREFLALKDINLQIRAGELVAIIGASGSGKSTLMNILGCLDNASSGSYQVNGQETRDLDDDALAALRRDHFGFIFQRYHLLPHLDALRNVEIPAVYAGVPQAGRHQRARELLTRLGLAGHLANRPSQLSGGQQQRVSICRALMNGGEVILADEPTGALDTASGKEVMNILLELHAAGHTVILVTHDPKVAAHAERIIEVSDGQIVDDRRTVREVAKPVEEVQPAAERAPRRLVASLGLFREAFKMAWIALISHRMRTLLTMLGIIIGITSVVSISAIGEGAKGYVLKDIQAIGSNTIDIYSGKSFGDSRAKAIETLSPADVTALNELYYVDSATPVIGQGSLVRYRNIDADVQLNGVSEQYFQVRNIPLAEGIVFSADDARRQAQVVVIDHNTRKRLFAPGVEALGQVILVGSLPCTVIGVTAENKNLFVAGNSLNVWMPYETAAGRVLGQRHLDSISVRIKDGLPSKRVEEEVNKLMLQRHGTKDFFTNNLDSIMQTVQKTSRSLTLLLSLIAVISLVVGGIGVMNIMLVSVTERTREIGIRMAVGARQSDIRQQFLVEAVMVCLIGGVIGIGLSYGIGYLFALFVKQWEMVFSLGSIVTAFVCSTLIGIVFGFVPARNAARLDPIEALARD.

Positions 22 to 260 (LRLAGVSRRF…PVEEVQPAAE (239 aa)) constitute an ABC transporter domain. ATP is bound at residue 58 to 65 (GASGSGKS). The next 4 membrane-spanning stretches (helical) occupy residues 292 to 312 (LLTMLGIIIGITSVVSISAIG), 540 to 560 (LTLLLSLIAVISLVVGGIGVM), 601 to 621 (IGGVIGIGLSYGIGYLFALFV), and 630 to 650 (LGSIVTAFVCSTLIGIVFGFV).

This sequence belongs to the ABC transporter superfamily. Macrolide exporter (TC 3.A.1.122) family. As to quaternary structure, probably part of a tripartite efflux system, which is composed of an inner membrane transporter, a periplasmic membrane fusion protein, and an outer membrane component.

The protein resides in the cell inner membrane. In terms of biological role, probably part of a tripartite efflux system. The sequence is that of Probable export ATP-binding/permease protein MacB from Pseudomonas entomophila (strain L48).